The chain runs to 150 residues: Phosphopantetheine adenylyltransferase (150 aa).

Thr-15 contacts substrate. Residues 15-16 and His-23 contribute to the ATP site; that span reads TF. Residues Ile-80 and Arg-94 each coordinate substrate. ATP is bound by residues 95–97, Glu-105, and 130–136; these read GIR and LENISSR.

This sequence belongs to the bacterial CoaD family. Homohexamer. Mg(2+) serves as cofactor.

Its subcellular location is the cytoplasm. It carries out the reaction (R)-4'-phosphopantetheine + ATP + H(+) = 3'-dephospho-CoA + diphosphate. The protein operates within cofactor biosynthesis; coenzyme A biosynthesis; CoA from (R)-pantothenate: step 4/5. Functionally, reversibly transfers an adenylyl group from ATP to 4'-phosphopantetheine, yielding dephospho-CoA (dPCoA) and pyrophosphate. The protein is Phosphopantetheine adenylyltransferase of Malacoplasma penetrans (strain HF-2) (Mycoplasma penetrans).